Reading from the N-terminus, the 415-residue chain is MFYKIKGTHDLLPTQTTSWQKVENSFHSFFKKHQFQEIRTPIMEYAEVFHRAAQHSEMVSKETYAFPDKKNRLITLRPEGTAGIVRSYIENKLDQTNKLQKFYYYGPYFRYERPQFGRYRQFHQLGVEVLGKTTPFLDIEVITLIYQFLKSLGLDDITIQINSLGSKEDHLDYVDIFKQYLKIYSNYLCGLCHERLNKNPLRIWDCKTCHLQDFLKQAPKIFDSLSPKSKKRFQTVLNGLEAMKVNFKTCHDLVRGLDYYTHTVFEITFNKMVLGGGGCYDHLVAALGGNQLSGIGFALGMERLMLTLQENNNFFVSPQPSLKLFLFILDPVFFHHGLTLVHILRNEGFCVEFNYSFTTFTKGLKEALKCLPNYLLILGHQEFAKKQITIKNIKTHTQTTIDQKDLIFYFQQQRV.

It belongs to the class-II aminoacyl-tRNA synthetase family. Homodimer.

Its subcellular location is the cytoplasm. The enzyme catalyses tRNA(His) + L-histidine + ATP = L-histidyl-tRNA(His) + AMP + diphosphate + H(+). This chain is Histidine--tRNA ligase, found in Phytoplasma australiense.